Here is a 682-residue protein sequence, read N- to C-terminus: Methionine--tRNA ligase (682 aa).

The 'HIGH' region motif lies at 14 to 24 (PYANGPVHLGH). Zn(2+)-binding residues include Cys145, Cys148, Cys158, and Cys161. A 'KMSKS' region motif is present at residues 331-335 (KMSKS). Lys334 contacts ATP. The 103-residue stretch at 580–682 (AFAAVDLRVA…SGAKPGQRIK (103 aa)) folds into the tRNA-binding domain.

The protein belongs to the class-I aminoacyl-tRNA synthetase family. MetG type 1 subfamily. In terms of assembly, homodimer. Zn(2+) serves as cofactor.

It localises to the cytoplasm. The enzyme catalyses tRNA(Met) + L-methionine + ATP = L-methionyl-tRNA(Met) + AMP + diphosphate. In terms of biological role, is required not only for elongation of protein synthesis but also for the initiation of all mRNA translation through initiator tRNA(fMet) aminoacylation. This is Methionine--tRNA ligase from Pseudomonas syringae pv. tomato (strain ATCC BAA-871 / DC3000).